Consider the following 68-residue polypeptide: MRTSYLLLFTLCLLLSEIASGGNFLTGLGHRSDHYNCVSSGGQCLYSACPIFTKIQGTCYGGKAKCCK.

An N-terminal signal peptide occupies residues 1-21 (MRTSYLLLFTLCLLLSEIASG). A propeptide spanning residues 22 to 32 (GNFLTGLGHRS) is cleaved from the precursor. Intrachain disulfides connect Cys-37–Cys-66, Cys-44–Cys-59, and Cys-49–Cys-67.

It belongs to the beta-defensin family. As to quaternary structure, monomer. Homodimer.

The protein localises to the secreted. It localises to the membrane. Has bactericidal activity. May act as a ligand for C-C chemokine receptor CCR6. Positively regulates the sperm motility and bactericidal activity in a CCR6-dependent manner. Binds to CCR6 and triggers Ca2+ mobilization in the sperm which is important for its motility. The polypeptide is Beta-defensin 1 (DEFB1) (Gorilla gorilla gorilla (Western lowland gorilla)).